The chain runs to 347 residues: Heat-inducible transcription repressor HrcA (347 aa).

It belongs to the HrcA family.

Functionally, negative regulator of class I heat shock genes (grpE-dnaK-dnaJ and groELS operons). Prevents heat-shock induction of these operons. The sequence is that of Heat-inducible transcription repressor HrcA from Lactococcus lactis subsp. lactis (strain IL1403) (Streptococcus lactis).